The chain runs to 375 residues: Queuine tRNA-ribosyltransferase (375 aa).

D90 serves as the catalytic Proton acceptor. Residues 90–94 (DSGGF), D144, Q190, and G217 contribute to the substrate site. Residues 248 to 254 (GIGTPHY) form an RNA binding region. The Nucleophile role is filled by D267. The RNA binding; important for wobble base 34 recognition stretch occupies residues 272–276 (ARITR). Zn(2+)-binding residues include C305, C307, C310, and H336.

This sequence belongs to the queuine tRNA-ribosyltransferase family. As to quaternary structure, homodimer. Within each dimer, one monomer is responsible for RNA recognition and catalysis, while the other monomer binds to the replacement base PreQ1. Requires Zn(2+) as cofactor.

The catalysed reaction is 7-aminomethyl-7-carbaguanine + guanosine(34) in tRNA = 7-aminomethyl-7-carbaguanosine(34) in tRNA + guanine. It functions in the pathway tRNA modification; tRNA-queuosine biosynthesis. Catalyzes the base-exchange of a guanine (G) residue with the queuine precursor 7-aminomethyl-7-deazaguanine (PreQ1) at position 34 (anticodon wobble position) in tRNAs with GU(N) anticodons (tRNA-Asp, -Asn, -His and -Tyr). Catalysis occurs through a double-displacement mechanism. The nucleophile active site attacks the C1' of nucleotide 34 to detach the guanine base from the RNA, forming a covalent enzyme-RNA intermediate. The proton acceptor active site deprotonates the incoming PreQ1, allowing a nucleophilic attack on the C1' of the ribose to form the product. After dissociation, two additional enzymatic reactions on the tRNA convert PreQ1 to queuine (Q), resulting in the hypermodified nucleoside queuosine (7-(((4,5-cis-dihydroxy-2-cyclopenten-1-yl)amino)methyl)-7-deazaguanosine). The protein is Queuine tRNA-ribosyltransferase of Borreliella burgdorferi (strain ZS7) (Borrelia burgdorferi).